The following is a 251-amino-acid chain: Long-distance movement protein (251 aa).

Positions Ser25–Lys134 are disordered. The Nuclear localization signal motif lies at Arg108 to Arg122. The Nuclear export signal signature appears at Leu149 to Leu153.

In terms of assembly, homooligomer. Interacts with host FIB2; this interaction, is required for ORF3 protein transiting through host Cajal body and nucleolus, relocalization of fibrillarin to the cytoplasm, and in presence of viral RNA, leads to the formation of stable RNPs.

It is found in the host cytoplasm. The protein localises to the host nucleus. It localises to the host nucleolus. In terms of biological role, protects and provides long-distance movement to viral RNA. Self associates and binds viral RNA and fibrillarin to form filamentous ribonucleoproteins (RNPs) protected from RNase. ORF3 protein actually fulfills functions that are usually provided by capsid protein, which is absent from umbraviruses' genome. The sequence is that of Long-distance movement protein (ORF3) from Clitoria (Hyacinth bean).